Consider the following 348-residue polypeptide: 4-hydroxy-2-oxovalerate aldolase 3 (348 aa).

In terms of domain architecture, Pyruvate carboxyltransferase spans 8–260 (ITVHDMTLRD…ETGVDVWKIQ (253 aa)). Residue 16-17 (RD) coordinates substrate. D17 is a Mn(2+) binding site. Residue H20 is the Proton acceptor of the active site. Substrate is bound by residues S170 and H199. The Mn(2+) site is built by H199 and H201. Y290 serves as a coordination point for substrate.

It belongs to the 4-hydroxy-2-oxovalerate aldolase family.

It catalyses the reaction (S)-4-hydroxy-2-oxopentanoate = acetaldehyde + pyruvate. The sequence is that of 4-hydroxy-2-oxovalerate aldolase 3 from Burkholderia lata (strain ATCC 17760 / DSM 23089 / LMG 22485 / NCIMB 9086 / R18194 / 383).